The following is a 32-amino-acid chain: Cyclotide glopa B (32 aa).

Residues 1–32 constitute a cross-link (cyclopeptide (Gly-Asn)); it reads GGSVPCIETCVWTGCFLVPGCSCKSDKKCYLN. 3 disulfides stabilise this stretch: C6–C21, C10–C23, and C15–C29.

In terms of processing, this is a cyclic peptide.

Functionally, probably participates in a plant defense mechanism. The sequence is that of Cyclotide glopa B from Gloeospermum pauciflorum.